The primary structure comprises 211 residues: Protein-methionine-sulfoxide reductase heme-binding subunit MsrQ (211 aa).

5 helical membrane passes run 10–30 (WLKV…VWAI), 82–102 (LWCF…ELGV), 116–136 (PYLT…FTST), 153–173 (FVYL…KIIS), and 178–198 (IYAG…LSLF).

This sequence belongs to the MsrQ family. Heterodimer of a catalytic subunit (MsrP) and a heme-binding subunit (MsrQ). Requires FMN as cofactor. The cofactor is heme b.

It is found in the cell inner membrane. Its function is as follows. Part of the MsrPQ system that repairs oxidized periplasmic proteins containing methionine sulfoxide residues (Met-O), using respiratory chain electrons. Thus protects these proteins from oxidative-stress damage caused by reactive species of oxygen and chlorine generated by the host defense mechanisms. MsrPQ is essential for the maintenance of envelope integrity under bleach stress, rescuing a wide series of structurally unrelated periplasmic proteins from methionine oxidation, including the primary periplasmic chaperone SurA and the lipoprotein Pal. MsrQ provides electrons for reduction to the reductase catalytic subunit MsrP, using the quinone pool of the respiratory chain. The protein is Protein-methionine-sulfoxide reductase heme-binding subunit MsrQ of Escherichia coli (strain 55989 / EAEC).